The chain runs to 88 residues: Small ribosomal subunit protein bS20 (88 aa).

Disordered regions lie at residues 1–23 and 69–88; these read MANSPQARKRARQAENRRQHNAA and PNKAARHKSRLNTKIKAMAA. Residues 69–81 are compositionally biased toward basic residues; the sequence is PNKAARHKSRLNT.

Belongs to the bacterial ribosomal protein bS20 family.

Binds directly to 16S ribosomal RNA. This Alcanivorax borkumensis (strain ATCC 700651 / DSM 11573 / NCIMB 13689 / SK2) protein is Small ribosomal subunit protein bS20.